The primary structure comprises 281 residues: Ras-related protein Rab-40C (281 aa).

Residues S23, G26, K27, and S46 each coordinate GTP. The switch-I stretch occupies residues S41–I49. Mg(2+)-binding residues include S46 and D69. GTP is bound by residues G72, N126, and R127. Positions G72–Q88 are switch-II. The SOCS box domain maps to L175 to A228. The interval S245–S281 is disordered. Positions P270–S281 are enriched in polar residues. Residue C273 is the site of S-palmitoyl cysteine attachment. C278 is lipidated: S-geranylgeranyl cysteine.

The protein belongs to the small GTPase superfamily. Rab family. As to quaternary structure, component of the cullin-5-RING E3 ubiquitin-protein ligase complex (ECS(RAB40C) complex) composed of CUL5, Elongin BC (ELOB and ELOC), RNF7/RBX2 and RAB40C. Interacts with protein phosphatase 6 (PP6) complex components ANKRD28, ANKRD52, PPP6C, PP6R1 and PP6R2; the interaction leads to ANKRD28 ubiquitination and decreased PP6 activity. Interacts with DAB2IP; DAB2IP acts as a GAP for RAB40C. Mg(2+) is required as a cofactor.

The protein resides in the cell membrane. It is found in the cytoplasm. Its subcellular location is the cytosol. The protein localises to the golgi apparatus membrane. The enzyme catalyses GTP + H2O = GDP + phosphate + H(+). It participates in protein modification; protein ubiquitination. Its activity is regulated as follows. Regulated by guanine nucleotide exchange factors (GEFs) which promote the exchange of bound GDP for free GTP. Regulated by GTPase activating proteins (GAPs) including DAB2IP, which increase the GTP hydrolysis activity. Inhibited by GDP dissociation inhibitors (GDIs). Functionally, RAB40C small GTPase acts as substrate-recognition component of the ECS(RAB40C) E3 ubiquitin ligase complex which mediates the ubiquitination and subsequent proteasomal degradation of target proteins. The Rab40 subfamily belongs to the Rab family that are key regulators of intracellular membrane trafficking, from the formation of transport vesicles to their fusion with membranes. Rabs cycle between an inactive GDP-bound form and an active GTP-bound form that is able to recruit to membranes different sets of downstream effectors directly responsible for vesicle formation, movement, tethering and fusion. As part of the ECS(RAB40C) complex, mediates ANKRD28 ubiquitination and degradation, thereby inhibiting protein phosphatase 6 (PP6) complex activity and focal adhesion assembly during cell migration. Also negatively regulate lipid droplets accumulation in a GTP-dependent manner. This is Ras-related protein Rab-40C from Mus musculus (Mouse).